Reading from the N-terminus, the 306-residue chain is tRNA pseudouridine synthase B (306 aa).

The active-site Nucleophile is the Asp43.

Belongs to the pseudouridine synthase TruB family. Type 1 subfamily.

The enzyme catalyses uridine(55) in tRNA = pseudouridine(55) in tRNA. Functionally, responsible for synthesis of pseudouridine from uracil-55 in the psi GC loop of transfer RNAs. This Anaplasma marginale (strain St. Maries) protein is tRNA pseudouridine synthase B.